The sequence spans 762 residues: Semaphorin-4A (762 aa).

The signal sequence occupies residues 1–32; it reads MALPALGLDSWSFLGLFLFQLLLLFLPPATTA. At 33-684 the chain is on the extracellular side; it reads GREGQGPTPR…LAAPKSYWPH (652 aa). Residues 37 to 495 enclose the Sema domain; it reads QGPTPRVKYH…FSGGIWKVPR (459 aa). Cysteine 114 and cysteine 125 are oxidised to a cystine. Residues asparagine 121 and asparagine 136 are each glycosylated (N-linked (GlcNAc...) asparagine). Disulfide bonds link cysteine 143-cysteine 152, cysteine 270-cysteine 380, and cysteine 294-cysteine 340. N-linked (GlcNAc...) asparagine glycosylation is found at asparagine 314 and asparagine 497. In terms of domain architecture, PSI spans 497 to 544; that stretch reads NCSVYESCMDCVLARDPHCAWDPESQTCRLLPTPILKSWKQDMQQGNP. Cystine bridges form between cysteine 498/cysteine 515 and cysteine 507/cysteine 524. The Ig-like C2-type domain occupies 574 to 632; the sequence is NSILELPCPQSSALASYHWSHGVEAIPEAPSTVYNGSLLLLLRDGAGGLYQCWATENDF. Asparagine 608 carries an N-linked (GlcNAc...) asparagine glycan. A helical membrane pass occupies residues 685–705; that stretch reads FLTVTVLLALVLSGALVTFLV. Residues 706 to 762 are Cytoplasmic-facing; that stretch reads SPLGALRARGKVQGCGTLPSREKAPLSSEQCLQPSKEGRTSASDMDADNNLQGTEVA. The tract at residues 722 to 762 is disordered; that stretch reads TLPSREKAPLSSEQCLQPSKEGRTSASDMDADNNLQGTEVA.

The protein belongs to the semaphorin family. As to quaternary structure, interacts with PLXNB1, PLXNB2, PLXNB3, PLXND1 and TIMD2.

Its subcellular location is the cell membrane. Functionally, cell surface receptor for PLXNB1, PLXNB2, PLXNB3 and PLXND1 that plays an important role in cell-cell signaling. Regulates glutamatergic and GABAergic synapse development. Promotes the development of inhibitory synapses in a PLXNB1-dependent manner and promotes the development of excitatory synapses in a PLXNB2-dependent manner. Plays a role in priming antigen-specific T-cells, promotes differentiation of Th1 T-helper cells, and thereby contributes to adaptive immunity. Promotes phosphorylation of TIMD2. Inhibits angiogenesis. Promotes axon growth cone collapse. Inhibits axonal extension by providing local signals to specify territories inaccessible for growing axons. The protein is Semaphorin-4A (SEMA4A) of Bos taurus (Bovine).